A 609-amino-acid chain; its full sequence is (R)-linalool synthase TPS5, chloroplastic (609 aa).

The transit peptide at 1 to 42 (MVSILSNIGMMVVTFKRPSLFTSLRRRSANNIIITKHSHPIS) directs the protein to the chloroplast. Positions 325, 362, 366, 503, and 506 each coordinate (2E)-geranyl diphosphate. 2 residues coordinate Mg(2+): aspartate 362 and aspartate 366. A DDXXD motif motif is present at residues 362-366 (DDIYD). Mg(2+) contacts are provided by aspartate 506, threonine 510, and glutamate 514.

The protein belongs to the terpene synthase family. Tpsb subfamily. Requires Mg(2+) as cofactor. Mn(2+) is required as a cofactor. Highly expressed in young fruits and plant tops. Expressed in flower buds and trichomes of petioles and stems. Expressed at low levels in young leaves, stems, petioles, sepals and petals.

The protein localises to the plastid. Its subcellular location is the chloroplast. It catalyses the reaction (2E)-geranyl diphosphate + H2O = (R)-linalool + diphosphate. It carries out the reaction (2E,6E)-farnesyl diphosphate + H2O = (6E)-nerolidol + diphosphate. It functions in the pathway secondary metabolite biosynthesis; terpenoid biosynthesis. In terms of biological role, involved in monoterpene (C10) biosynthesis in glandular trichomes. Converts geranyl diphosphate to linalool in glandular trichomes in response to jasmonate (JA). Can convert farnesyl diphosphate to nerolidol in vitro. The polypeptide is (R)-linalool synthase TPS5, chloroplastic (Solanum lycopersicum (Tomato)).